The chain runs to 223 residues: Endonuclease V (223 aa).

Positions 45 and 113 each coordinate Mg(2+).

The protein belongs to the endonuclease V family. It depends on Mg(2+) as a cofactor.

Its subcellular location is the cytoplasm. The enzyme catalyses Endonucleolytic cleavage at apurinic or apyrimidinic sites to products with a 5'-phosphate.. Its function is as follows. DNA repair enzyme involved in the repair of deaminated bases. Selectively cleaves double-stranded DNA at the second phosphodiester bond 3' to a deoxyinosine leaving behind the intact lesion on the nicked DNA. The polypeptide is Endonuclease V (Dehalococcoides mccartyi (strain ATCC BAA-2100 / JCM 16839 / KCTC 5957 / BAV1)).